Consider the following 214-residue polypeptide: Triosephosphate isomerase (214 aa).

Residue 6–8 (NLK) participates in substrate binding. His85 functions as the Electrophile in the catalytic mechanism. Residue Glu133 is the Proton acceptor of the active site. Residues Ile138, Gly173, and 194-195 (AS) each bind substrate.

The protein belongs to the triosephosphate isomerase family. As to quaternary structure, homotetramer; dimer of dimers.

It is found in the cytoplasm. It carries out the reaction D-glyceraldehyde 3-phosphate = dihydroxyacetone phosphate. Its pathway is carbohydrate biosynthesis; gluconeogenesis. It participates in carbohydrate degradation; glycolysis; D-glyceraldehyde 3-phosphate from glycerone phosphate: step 1/1. In terms of biological role, involved in the gluconeogenesis. Catalyzes stereospecifically the conversion of dihydroxyacetone phosphate (DHAP) to D-glyceraldehyde-3-phosphate (G3P). The polypeptide is Triosephosphate isomerase (Halobacterium salinarum (strain ATCC 700922 / JCM 11081 / NRC-1) (Halobacterium halobium)).